Consider the following 324-residue polypeptide: Fructose-1,6-bisphosphatase class 1 (324 aa).

Positions 88, 107, 109, and 110 each coordinate Mg(2+). Residues aspartate 110–serine 113, asparagine 199, and lysine 265 each bind substrate. A Mg(2+)-binding site is contributed by glutamate 271.

It belongs to the FBPase class 1 family. In terms of assembly, homotetramer. It depends on Mg(2+) as a cofactor.

The protein localises to the cytoplasm. The enzyme catalyses beta-D-fructose 1,6-bisphosphate + H2O = beta-D-fructose 6-phosphate + phosphate. It functions in the pathway carbohydrate biosynthesis; gluconeogenesis. The sequence is that of Fructose-1,6-bisphosphatase class 1 from Neisseria gonorrhoeae (strain ATCC 700825 / FA 1090).